The following is a 241-amino-acid chain: MAKNKAEKEKVHKVFQNISTNYDKLNNIISFEQHKVWRKRVMKSMQVKKGSKALDVCCGTADWTIALSKAVGPSGEVIGLDFSENMLKVGEEKTKNMSNIQLVQGDAMDLPFDDNEFDYVTIGFGLRNIPDYVIALKEMNRVLKPGGMAVCLETSQPTIPVFKQGYQLYFKFVMPIFGKLFAKSKEEYEWLQQSAFNFPDRDELKALFQLAGFKNVEVKSFTGGVAAMHLGYKEKETAKGD.

Residues Thr-60, Asp-81, and 106–107 (DA) contribute to the S-adenosyl-L-methionine site.

The protein belongs to the class I-like SAM-binding methyltransferase superfamily. MenG/UbiE family.

The catalysed reaction is a 2-demethylmenaquinol + S-adenosyl-L-methionine = a menaquinol + S-adenosyl-L-homocysteine + H(+). It functions in the pathway quinol/quinone metabolism; menaquinone biosynthesis; menaquinol from 1,4-dihydroxy-2-naphthoate: step 2/2. Functionally, methyltransferase required for the conversion of demethylmenaquinol (DMKH2) to menaquinol (MKH2). This is Demethylmenaquinone methyltransferase from Staphylococcus carnosus (strain TM300).